Consider the following 513-residue polypeptide: Bifunctional purine biosynthesis protein PurH (513 aa).

The region spanning M1–V144 is the MGS-like domain.

It belongs to the PurH family.

It catalyses the reaction (6R)-10-formyltetrahydrofolate + 5-amino-1-(5-phospho-beta-D-ribosyl)imidazole-4-carboxamide = 5-formamido-1-(5-phospho-D-ribosyl)imidazole-4-carboxamide + (6S)-5,6,7,8-tetrahydrofolate. The enzyme catalyses IMP + H2O = 5-formamido-1-(5-phospho-D-ribosyl)imidazole-4-carboxamide. The protein operates within purine metabolism; IMP biosynthesis via de novo pathway; 5-formamido-1-(5-phospho-D-ribosyl)imidazole-4-carboxamide from 5-amino-1-(5-phospho-D-ribosyl)imidazole-4-carboxamide (10-formyl THF route): step 1/1. Its pathway is purine metabolism; IMP biosynthesis via de novo pathway; IMP from 5-formamido-1-(5-phospho-D-ribosyl)imidazole-4-carboxamide: step 1/1. In Lactobacillus delbrueckii subsp. bulgaricus (strain ATCC BAA-365 / Lb-18), this protein is Bifunctional purine biosynthesis protein PurH.